The primary structure comprises 184 residues: Large ribosomal subunit protein uL22B (184 aa).

Lys46 is covalently cross-linked (Glycyl lysine isopeptide (Lys-Gly) (interchain with G-Cter in ubiquitin)). Thr70 carries the phosphothreonine modification.

It belongs to the universal ribosomal protein uL22 family. As to quaternary structure, component of the large ribosomal subunit (LSU). Mature yeast ribosomes consist of a small (40S) and a large (60S) subunit. The 40S small subunit contains 1 molecule of ribosomal RNA (18S rRNA) and 33 different proteins (encoded by 57 genes). The large 60S subunit contains 3 rRNA molecules (25S, 5.8S and 5S rRNA) and 46 different proteins (encoded by 81 genes). uL22 is associated with the polypeptide exit tunnel.

The protein localises to the cytoplasm. In terms of biological role, component of the ribosome, a large ribonucleoprotein complex responsible for the synthesis of proteins in the cell. The small ribosomal subunit (SSU) binds messenger RNAs (mRNAs) and translates the encoded message by selecting cognate aminoacyl-transfer RNA (tRNA) molecules. The large subunit (LSU) contains the ribosomal catalytic site termed the peptidyl transferase center (PTC), which catalyzes the formation of peptide bonds, thereby polymerizing the amino acids delivered by tRNAs into a polypeptide chain. The nascent polypeptides leave the ribosome through a tunnel in the LSU and interact with protein factors that function in enzymatic processing, targeting, and the membrane insertion of nascent chains at the exit of the ribosomal tunnel. This is Large ribosomal subunit protein uL22B from Saccharomyces cerevisiae (strain ATCC 204508 / S288c) (Baker's yeast).